A 430-amino-acid chain; its full sequence is MPIVIRNGRVIDPASNTDRVADVFIVDGRIAGVAPNLSSPKAEVFDATGMIVAPGFIDMHVHLREPGFEHAETIESGSRAAAAGGFTSICCMPNTKPVNDSAMVTSYIVEQARSKAAVNVFPIGAITKGSAGEELAAIGAMKAAGAVAISDDGLPVMNARVMRRAMEFARSYDLPIIQHCEDLNLSAGGDMHEGANSVRWGLRGIPAASEDVMVARDLVLAQLTGARYHVAHISTRNAVAMVEYGRSHGLPVTCETTPHHFGLADADMAPYDSNYKMKPPLRSCGHRDAIIEGLIAGTISAIATDHAPHPGSEKMQEFERCPFGIIGLETALALALEELVAPGKITLARLIELFTTGPESVMRLGRGTLTPGAPGDVTVFSPTVEWTYDVNQSASRSRNSPFHARTFHGGPMATIVNGGLKWSRQSSHIT.

Zn(2+) is bound by residues His-60 and His-62. Substrate contacts are provided by residues 62 to 64 and Asn-94; that span reads HLR. Zn(2+)-binding residues include Asp-152, His-179, His-232, and Asp-305. Residue Asp-305 is part of the active site. Substrate is bound by residues His-309 and 323–324; that span reads FG.

It belongs to the metallo-dependent hydrolases superfamily. DHOase family. Class I DHOase subfamily. Zn(2+) serves as cofactor.

The catalysed reaction is (S)-dihydroorotate + H2O = N-carbamoyl-L-aspartate + H(+). It functions in the pathway pyrimidine metabolism; UMP biosynthesis via de novo pathway; (S)-dihydroorotate from bicarbonate: step 3/3. Functionally, catalyzes the reversible cyclization of carbamoyl aspartate to dihydroorotate. This Solibacter usitatus (strain Ellin6076) protein is Dihydroorotase.